The following is a 102-amino-acid chain: Antimicrobial peptide 1 (102 aa).

The N-terminal stretch at 1–26 (MASTKLFFSVITVMMLIAMASEMVNG) is a signal peptide. Cystine bridges form between Cys37-Cys90, Cys47-Cys102, and Cys49-Cys75.

It is found in the secreted. Its function is as follows. Antimicrobial peptide which inhibits the growth of a variety of fungi, oomycetes, Gram-positive bacterial phytopatogenes and S.cerevisiae in vitro. No activity against E.coli. The sequence is that of Antimicrobial peptide 1 from Macadamia integrifolia (Macadamia nut).